A 624-amino-acid chain; its full sequence is APC membrane recruitment protein 2 (624 aa).

Disordered stretches follow at residues 1–308 and 342–596; these read MDSH…PPSE and EDVG…IPVS. Residues 74 to 91 are compositionally biased toward basic and acidic residues; the sequence is SGKKEDAGGGEAQGKDAP. The span at 101-111 shows a compositional bias: low complexity; that stretch reads SASSSVAKSHS. 2 stretches are compositionally biased toward basic and acidic residues: residues 120–132 and 247–258; these read GRPENGKAAENAE and RRLEELCGERPD. Low complexity-rich tracts occupy residues 272-282 and 295-307; these read ITGDIPITTIP and AAAPDPSSVDPPS. Gly residues predominate over residues 406–416; it reads TGGGGGGGGGT. The segment covering 450–464 has biased composition (basic and acidic residues); that stretch reads NNKEEQKGREKEQHE. A compositionally biased stretch (polar residues) spans 535-549; it reads PITTTCSLKTPSSTV.

Belongs to the Amer family.

The protein localises to the cell membrane. Functionally, negative regulator of the canonical Wnt signaling pathway involved in neuroectodermal patterning. Acts by specifically binding phosphatidylinositol 4,5-bisphosphate (PtdIns(4,5)P2), translocating to the cell membrane and interacting with key regulators of the canonical Wnt signaling pathway, such as components of the beta-catenin destruction complex. The protein is APC membrane recruitment protein 2 (AMER2) of Gallus gallus (Chicken).